The primary structure comprises 135 residues: Galectin-1 (135 aa).

The residue at position 2 (alanine 2) is an N-acetylalanine. Residues 4–135 (GLVASNLNLK…DFKIKCVAFD (132 aa)) enclose the Galectin domain. 2 positions are modified to N6-acetyllysine: lysine 13 and lysine 29. A Phosphoserine modification is found at serine 30. A beta-D-galactoside is bound by residues 45 to 49 (HFNPR), histidine 53, asparagine 62, and 69 to 72 (WGAE). Position 108 is an N6-acetyllysine; alternate (lysine 108). Lysine 108 carries the post-translational modification N6-succinyllysine; alternate. N6-acetyllysine is present on lysine 128.

As to quaternary structure, homodimer. Binds LGALS3BP. Interacts with CD2, CD3, CD4, CD6, CD7, CD43, ALCAM and CD45. Interacts with laminin (via poly-N-acetyllactosamine). Interacts with SUSD2. Interacts with cargo receptor TMED10; the interaction mediates the translocation from the cytoplasm into the ERGIC (endoplasmic reticulum-Golgi intermediate compartment) and thereby secretion. Post-translationally, the N-terminus is blocked.

Its subcellular location is the secreted. It localises to the extracellular space. It is found in the extracellular matrix. The protein localises to the cytoplasm. In terms of biological role, lectin that binds beta-galactoside and a wide array of complex carbohydrates. Plays a role in regulating apoptosis, cell proliferation and cell differentiation. Inhibits CD45 protein phosphatase activity and therefore the dephosphorylation of Lyn kinase. Strong inducer of T-cell apoptosis. The polypeptide is Galectin-1 (Bubalus bubalis (Domestic water buffalo)).